We begin with the raw amino-acid sequence, 67 residues long: Conotoxin TsMMSK-B022 (67 aa).

An N-terminal signal peptide occupies residues 1–22 (MMSKLGVLLTICLLLFPLTAVS). The propeptide occupies 23–50 (LDGDQPADLPELRAQDFAPERSPWFDPV). 3 disulfide bridges follow: C53–C65, C54–C61, and C58–C64. P63 carries the 4-hydroxyproline modification.

The protein belongs to the conotoxin M superfamily. In terms of tissue distribution, expressed by the venom duct.

It localises to the secreted. The sequence is that of Conotoxin TsMMSK-B022 from Conus tessulatus (Tessellate cone).